A 123-amino-acid chain; its full sequence is Immunoglobulin heavy variable 4-34 (123 aa).

Positions 1–26 (MDLLHKNMKHLWFFLLLVAAPRWVLS) are cleaved as a signal peptide. The v region stretch occupies residues 26-123 (SQVQLQQWGA…ADTAVYYCAR (98 aa)). Residues 27-51 (QVQLQQWGAGLLKPSETLSLTCAVY) are framework-1. The Ig-like domain occupies 27–123 (QVQLQQWGAG…ADTAVYYCAR (97 aa)). A disulfide bond links Cys-48 and Cys-121. The complementarity-determining-1 stretch occupies residues 52–59 (GGSFSGYY). The interval 60 to 76 (WSWIRQPPGKGLEWIGE) is framework-2. Residues 77–83 (INHSGST) are complementarity-determining-2. The N-linked (GlcNAc...) asparagine glycan is linked to Asn-78. Residues 84–121 (NYNPSLKSRVTISVDTSKNQFSLKLSSVTAADTAVYYC) form a framework-3 region. The segment at 122–123 (AR) is complementarity-determining-3.

Immunoglobulins are composed of two identical heavy chains and two identical light chains; disulfide-linked.

The protein resides in the secreted. The protein localises to the cell membrane. Functionally, v region of the variable domain of immunoglobulin heavy chains that participates in the antigen recognition. Immunoglobulins, also known as antibodies, are membrane-bound or secreted glycoproteins produced by B lymphocytes. In the recognition phase of humoral immunity, the membrane-bound immunoglobulins serve as receptors which, upon binding of a specific antigen, trigger the clonal expansion and differentiation of B lymphocytes into immunoglobulins-secreting plasma cells. Secreted immunoglobulins mediate the effector phase of humoral immunity, which results in the elimination of bound antigens. The antigen binding site is formed by the variable domain of one heavy chain, together with that of its associated light chain. Thus, each immunoglobulin has two antigen binding sites with remarkable affinity for a particular antigen. The variable domains are assembled by a process called V-(D)-J rearrangement and can then be subjected to somatic hypermutations which, after exposure to antigen and selection, allow affinity maturation for a particular antigen. The polypeptide is Immunoglobulin heavy variable 4-34 (Homo sapiens (Human)).